We begin with the raw amino-acid sequence, 437 residues long: Perilipin-2 (437 aa).

Ala-2 carries the post-translational modification N-acetylalanine. Ser-215 carries the post-translational modification Phosphoserine. Tyr-232 carries the post-translational modification Phosphotyrosine. Positions 412–437 (SQNAQDQGAEMDKSSQETQRSEHKTH) are disordered. A compositionally biased stretch (basic and acidic residues) spans 421 to 437 (EMDKSSQETQRSEHKTH).

The protein belongs to the perilipin family. As to quaternary structure, interacts with IRGC. Acylated; primarily with C14, C16 and C18 fatty acids. Post-translationally, phosphorylation at Tyr-232 by isoform 1 of CHKA (CHKalpha2) promotes dissociation from lipid droplets: dissociation is followed by recruitment of autophagosome machinery to lipid droplets and subsequent lipid droplet lipolysis. In terms of processing, polyubiquitination of Nt-acetylatable A-PLIN2 by MARCHF6 lead to degradation by 26S proteasomes. As to expression, milk lipid globules.

The protein resides in the membrane. It localises to the lipid droplet. In terms of biological role, structural component of lipid droplets, which is required for the formation and maintenance of lipid storage droplets. In Homo sapiens (Human), this protein is Perilipin-2.